The chain runs to 535 residues: Succinate-semialdehyde dehydrogenase, mitochondrial (535 aa).

Residues 1 to 47 (MATCFWLRSCGARRLGSTFPGCRLRPRAGGLVPASGPAPGPAQLRCY) constitute a mitochondrion transit peptide. K126 is modified (N6-acetyllysine; alternate). Position 126 is an N6-succinyllysine; alternate (K126). K135 and K184 each carry N6-succinyllysine. Residues R213 and 228-231 (KPAE) contribute to the NAD(+) site. Residue R213 coordinates substrate. An N6-acetyllysine; alternate modification is found at K265. N6-succinyllysine; alternate is present on K265. NAD(+) is bound at residue 284–289 (GSTTTG). Catalysis depends on E306, which acts as the Proton acceptor. R334 provides a ligand contact to substrate. C340 functions as the Nucleophile in the catalytic mechanism. Residues C340 and C342 are joined by a disulfide bond. The residue at position 365 (K365) is an N6-acetyllysine. The residue at position 402 (K402) is an N6-succinyllysine. The residue at position 411 (K411) is an N6-acetyllysine. S498 lines the substrate pocket. S499 bears the Phosphoserine mark.

The protein belongs to the aldehyde dehydrogenase family. Homotetramer.

It localises to the mitochondrion. The catalysed reaction is succinate semialdehyde + NAD(+) + H2O = succinate + NADH + 2 H(+). Its pathway is amino-acid degradation; 4-aminobutanoate degradation. Its activity is regulated as follows. Redox-regulated. Inhibited under oxydizing conditions. Catalyzes one step in the degradation of the inhibitory neurotransmitter gamma-aminobutyric acid (GABA). The polypeptide is Succinate-semialdehyde dehydrogenase, mitochondrial (ALDH5A1) (Hylobates lar (Lar gibbon)).